A 376-amino-acid polypeptide reads, in one-letter code: 23S rRNA (uracil(747)-C(5))-methyltransferase RlmC (376 aa).

[4Fe-4S] cluster is bound by residues Cys-3, Cys-11, Cys-14, and Cys-87. Gln-212, Phe-241, Glu-262, and Asn-307 together coordinate S-adenosyl-L-methionine. Cys-334 acts as the Nucleophile in catalysis.

The protein belongs to the class I-like SAM-binding methyltransferase superfamily. RNA M5U methyltransferase family. RlmC subfamily.

It carries out the reaction uridine(747) in 23S rRNA + S-adenosyl-L-methionine = 5-methyluridine(747) in 23S rRNA + S-adenosyl-L-homocysteine + H(+). Functionally, catalyzes the formation of 5-methyl-uridine at position 747 (m5U747) in 23S rRNA. The polypeptide is 23S rRNA (uracil(747)-C(5))-methyltransferase RlmC (Citrobacter koseri (strain ATCC BAA-895 / CDC 4225-83 / SGSC4696)).